Consider the following 165-residue polypeptide: Chorismate pyruvate-lyase (165 aa).

Residues M35, R77, L115, and E156 each contribute to the substrate site.

It belongs to the UbiC family. As to quaternary structure, monomer.

The protein localises to the cytoplasm. It carries out the reaction chorismate = 4-hydroxybenzoate + pyruvate. The protein operates within cofactor biosynthesis; ubiquinone biosynthesis. In terms of biological role, removes the pyruvyl group from chorismate, with concomitant aromatization of the ring, to provide 4-hydroxybenzoate (4HB) for the ubiquinone pathway. The polypeptide is Chorismate pyruvate-lyase (Shigella sonnei (strain Ss046)).